Here is a 103-residue protein sequence, read N- to C-terminus: MAAKIRQNDEVIVLTGKDKGKRGKVTKVLPNGKVFVEGINIITKHEKPVPALGKAGGLVKKEAAIDASNVAIFNPKTNKADRVGFRFEDGKKVRFFKSNNEII.

It belongs to the universal ribosomal protein uL24 family. As to quaternary structure, part of the 50S ribosomal subunit.

Functionally, one of two assembly initiator proteins, it binds directly to the 5'-end of the 23S rRNA, where it nucleates assembly of the 50S subunit. In terms of biological role, one of the proteins that surrounds the polypeptide exit tunnel on the outside of the subunit. This chain is Large ribosomal subunit protein uL24, found in Haemophilus influenzae (strain 86-028NP).